Here is a 286-residue protein sequence, read N- to C-terminus: Expansin-like protein 1 (286 aa).

Residues 1–21 form the signal peptide; sequence MKTFVLFVILLCLTFLSISKS. Residues 22-265 are Extracellular-facing; that stretch reads ETCPFSQSLV…TGASIGTPSD (244 aa). Positions 44-145 constitute an Expansin-like EG45 domain; the sequence is AGNCGYENLM…YKVPCGVNGN (102 aa). 2 cysteine pairs are disulfide-bonded: cysteine 47–cysteine 77 and cysteine 80–cysteine 140. N-linked (GlcNAc...) asparagine glycosylation is found at asparagine 82 and asparagine 89. A helical transmembrane segment spans residues 266-286; the sequence is ASSLTLYALFSLTILFLVMLN.

This sequence belongs to the expansin family. Expansin A subfamily.

The protein localises to the membrane. Functionally, may serve to lubricate the movement of the cellulose microfibrils during cell growth and wall extension and/or they may serve to maintain the fluid state of the slug cell wall. This chain is Expansin-like protein 1 (expl1), found in Dictyostelium discoideum (Social amoeba).